Consider the following 498-residue polypeptide: Phosphatidylserine synthase (498 aa).

Residues 1–65 form a disordered region; sequence MKKRTNSRGT…GSVSSAGARR (65 aa). Over 1-92 the chain is Cytoplasmic; that stretch reads MKKRTNSRGT…VDDISLDFFY (92 aa). The span at 7–25 shows a compositional bias: polar residues; the sequence is SRGTPTSSGDALLDTSFSS. A helical membrane pass occupies residues 93-113; it reads KPHTITLLAVSVLAVMYFAFV. Residues 114–122 lie on the Lumenal side of the membrane; sequence RNEANVDEN. The helical transmembrane segment at 123–143 threads the bilayer; the sequence is LWAGLLCIVFFFLIVSVIAFP. Residues 144–153 are Cytoplasmic-facing; sequence NGPFTRPHPA. A helical membrane pass occupies residues 154-174; that stretch reads VWRILFGCSVLYLLTLQFLMF. Topologically, residues 175 to 239 are lumenal; the sequence is QNYPTIRSIF…AFKAILIRHM (65 aa). N-linked (GlcNAc...) asparagine glycosylation is present at N205. Residues 240–260 traverse the membrane as a helical segment; sequence GILWAISVMWEITEITFAHLL. Residues 261–266 lie on the Cytoplasmic side of the membrane; sequence PNFIEC. A helical transmembrane segment spans residues 267–287; the sequence is WWDALILDVIICNGLGIWMGL. Residues 288 to 339 lie on the Lumenal side of the membrane; that stretch reads KICQILEMREYKWASIKDISTTTGKIKRAMLQFTPESWSAIRWLDPKSTAMR. The chain crosses the membrane as a helical span at residues 340 to 360; it reads FAAVIQLVIFWQVTELNTFFL. The Cytoplasmic segment spans residues 361 to 367; sequence KHIFEMP. The helical transmembrane segment at 368-388 threads the bilayer; the sequence is PDHFIVIGRLIFIGLFVAPSV. The Lumenal segment spans residues 389 to 402; that stretch reads RQYYVYVTDTRCKR. A helical transmembrane segment spans residues 403 to 423; it reads VGTQCWVYGAIMVSEAILCIK. Over 424–436 the chain is Cytoplasmic; it reads NGKELFERTQAIN. Residues 437–457 form a helical membrane-spanning segment; that stretch reads IVLWLTVQVIISVAFVYLAVY. Residues 458–498 are Lumenal-facing; it reads WQQRQLKKVSSTPAKTKETIPASSSSPSKGKLSPQKEKKLK. A disordered region spans residues 465 to 498; the sequence is KVSSTPAKTKETIPASSSSPSKGKLSPQKEKKLK. Residues 478-490 show a composition bias toward low complexity; sequence PASSSSPSKGKLS.

Belongs to the phosphatidyl serine synthase family.

Its subcellular location is the endoplasmic reticulum membrane. The catalysed reaction is a 1,2-diacyl-sn-glycero-3-phosphoethanolamine + L-serine = a 1,2-diacyl-sn-glycero-3-phospho-L-serine + ethanolamine. The protein operates within phospholipid metabolism; phosphatidylserine biosynthesis. Its function is as follows. Catalyzes a base-exchange reaction in which the polar head group of phosphatidylethanolamine (PE) is replaced by L-serine. The chain is Phosphatidylserine synthase from Drosophila melanogaster (Fruit fly).